Reading from the N-terminus, the 269-residue chain is Large ribosomal subunit protein uL3m (269 aa).

The transit peptide at 1-19 (MSKFLQGSIFSISKLHVRY) directs the protein to the mitochondrion.

The protein belongs to the universal ribosomal protein uL3 family. In terms of assembly, component of the mitochondrial large ribosomal subunit (mt-LSU). Mature yeast 74S mitochondrial ribosomes consist of a small (37S) and a large (54S) subunit. The 37S small subunit contains a 15S ribosomal RNA (15S mt-rRNA) and 34 different proteins. The 54S large subunit contains a 21S rRNA (21S mt-rRNA) and 46 different proteins.

It is found in the mitochondrion. Functionally, component of the mitochondrial ribosome (mitoribosome), a dedicated translation machinery responsible for the synthesis of mitochondrial genome-encoded proteins, including at least some of the essential transmembrane subunits of the mitochondrial respiratory chain. The mitoribosomes are attached to the mitochondrial inner membrane and translation products are cotranslationally integrated into the membrane. In Saccharomyces cerevisiae (strain ATCC 204508 / S288c) (Baker's yeast), this protein is Large ribosomal subunit protein uL3m (MRPL9).